The sequence spans 71 residues: 26S proteasome complex subunit rpn15 (71 aa).

The disordered stretch occupies residues 1–38 (MSRAALPSLENLEDDDEFEDFATENWPMKDTELDTGDD). Residues 11-22 (NLEDDDEFEDFA) show a composition bias toward acidic residues. The segment at 16 to 25 (DEFEDFATEN) is UBS-II. A UBS-I region spans residues 38-49 (DTLWENNWDDED).

This sequence belongs to the DSS1/SEM1 family. Interacts with mlo3, rae1, nup98/nup189 and nup146. Interacts with rad24. Interacts (via UBSs) with ubiquitin (ubi3/ubi5).

The protein resides in the cytoplasm. The protein localises to the nucleus. Functionally, versatile protein that might stabilize multiple protein complexes involved in diverse pathways. Subunit of the 26S proteasome which plays a role in ubiquitin-dependent proteolysis. Acts as a ubiquitin receptor of the 26S proteasome, by interacting with ubiquitin chains linked by 'Lys-63' and 'Lys-48'. Involved in nuclear export of specific sets of mRNAs. Links the mRNA adapter mlo3 to rae1 for targeting mRNA-protein complex to the proteins of the nucleoporin complex (NPC). Involved in recombinational repair of DNA. Plays a critical role in linking repair and checkpoint factors to damaged DNA sites by specifically recruiting rad24 and cdc25 to the DSBs. This chain is 26S proteasome complex subunit rpn15 (rpn15), found in Schizosaccharomyces pombe (strain 972 / ATCC 24843) (Fission yeast).